A 270-amino-acid polypeptide reads, in one-letter code: Chymotrypsin-like elastase family member 3A (270 aa).

The segment at residues 1–15 (MMLRLLSSLLLVAVA) is a signal peptide (or 16). Residues 16–28 (SGYGPPSSHSSSR) constitute a propeptide, activation peptide. The Peptidase S1 domain maps to 29-268 (VVHGEDAVPY…FIDWIEETIA (240 aa)). A disulfide bond links cysteine 58 and cysteine 74. The Charge relay system role is filled by histidine 73. Residue asparagine 114 is glycosylated (N-linked (GlcNAc...) asparagine). An intrachain disulfide couples cysteine 117 to cysteine 120. The Charge relay system role is filled by aspartate 123. Cystine bridges form between cysteine 157-cysteine 223, cysteine 188-cysteine 204, and cysteine 213-cysteine 244. Residue serine 217 is the Charge relay system of the active site.

This sequence belongs to the peptidase S1 family. Elastase subfamily.

It catalyses the reaction Preferential cleavage: Ala-|-Xaa. Does not hydrolyze elastin.. Functionally, efficient protease with alanine specificity but only little elastolytic activity. The protein is Chymotrypsin-like elastase family member 3A (CELA3A) of Homo sapiens (Human).